Consider the following 95-residue polypeptide: Small ribosomal subunit protein bS6 (95 aa).

Belongs to the bacterial ribosomal protein bS6 family.

Its function is as follows. Binds together with bS18 to 16S ribosomal RNA. This Corynebacterium kroppenstedtii (strain DSM 44385 / JCM 11950 / CIP 105744 / CCUG 35717) protein is Small ribosomal subunit protein bS6.